A 250-amino-acid chain; its full sequence is tRNA (guanine-N(1)-)-methyltransferase (250 aa).

S-adenosyl-L-methionine contacts are provided by residues Gly115 and 135–140; that span reads LGDFVL.

This sequence belongs to the RNA methyltransferase TrmD family. Homodimer.

It localises to the cytoplasm. It catalyses the reaction guanosine(37) in tRNA + S-adenosyl-L-methionine = N(1)-methylguanosine(37) in tRNA + S-adenosyl-L-homocysteine + H(+). Functionally, specifically methylates guanosine-37 in various tRNAs. This is tRNA (guanine-N(1)-)-methyltransferase from Legionella pneumophila (strain Lens).